A 227-amino-acid polypeptide reads, in one-letter code: Orotidine 5'-phosphate decarboxylase (227 aa).

Substrate contacts are provided by residues D8, K30, 58-67 (DLKLYDIPNT), T117, R177, Q186, G206, and R207. The active-site Proton donor is K60.

This sequence belongs to the OMP decarboxylase family. Type 1 subfamily. Homodimer.

The enzyme catalyses orotidine 5'-phosphate + H(+) = UMP + CO2. The protein operates within pyrimidine metabolism; UMP biosynthesis via de novo pathway; UMP from orotate: step 2/2. Functionally, catalyzes the decarboxylation of orotidine 5'-monophosphate (OMP) to uridine 5'-monophosphate (UMP). In Campylobacter lari (strain RM2100 / D67 / ATCC BAA-1060), this protein is Orotidine 5'-phosphate decarboxylase.